We begin with the raw amino-acid sequence, 943 residues long: UvrABC system protein A (943 aa).

32-39 (GLSGSGKS) is an ATP binding site. The C4-type zinc-finger motif lies at 251–278 (CPVCGFTVPELEPRLFSFNAPFGSCSEC). 2 consecutive ABC transporter domains span residues 308–589 (WNPI…SKSI) and 609–937 (GNGR…HYLK). Residue 641–648 (GVSGSGKS) coordinates ATP. The C4-type zinc-finger motif lies at 740-766 (CEACSGDGIIKIEMHFLPDVYVACEVC).

It belongs to the ABC transporter superfamily. UvrA family. Forms a heterotetramer with UvrB during the search for lesions.

It is found in the cytoplasm. Functionally, the UvrABC repair system catalyzes the recognition and processing of DNA lesions. UvrA is an ATPase and a DNA-binding protein. A damage recognition complex composed of 2 UvrA and 2 UvrB subunits scans DNA for abnormalities. When the presence of a lesion has been verified by UvrB, the UvrA molecules dissociate. The polypeptide is UvrABC system protein A (Streptococcus pneumoniae serotype 4 (strain ATCC BAA-334 / TIGR4)).